The primary structure comprises 101 residues: Small ribosomal subunit protein uS14 (101 aa).

The protein belongs to the universal ribosomal protein uS14 family. As to quaternary structure, part of the 30S ribosomal subunit. Contacts proteins S3 and S10.

Functionally, binds 16S rRNA, required for the assembly of 30S particles and may also be responsible for determining the conformation of the 16S rRNA at the A site. The protein is Small ribosomal subunit protein uS14 of Dechloromonas aromatica (strain RCB).